We begin with the raw amino-acid sequence, 107 residues long: uncharacterized protein (107 aa).

Residues 6–107 (KARIDQLVTA…QEMLEVALAS (102 aa)) form the Glutaredoxin domain. Glutathione is bound at residue lysine 23. Cysteine 31 contributes to the [2Fe-2S] cluster binding site. Glutathione is bound by residues arginine 60 and 85–86 (SD).

It belongs to the glutaredoxin family. Monothiol subfamily.

This is an uncharacterized protein from Synechocystis sp. (strain ATCC 27184 / PCC 6803 / Kazusa).